The following is a 759-amino-acid chain: Zinc finger protein 287 (759 aa).

The SCAN box domain maps to 42–124 (RRNFRNFPYP…ALVEDLTQIL (83 aa)). The disordered stretch occupies residues 127–154 (EEAPQSSALPQDTPEDDPNHDPNPASQA). The KRAB domain occupies 166–234 (VTFNDVAVDI…IKEIVEGPNP (69 aa)). C2H2-type zinc fingers lie at residues 366–388 (YSCN…RENH), 394–416 (YECE…QRMH), 422–444 (YECH…QRIH), 450–472 (YKCE…QRTH), 478–500 (YKCL…QRVH), 506–528 (YICN…QKIH), 534–556 (YKCN…QRIH), 562–584 (YKCT…QTTH), 590–612 (YICN…HRTH), 618–640 (YKCS…QRIH), 646–668 (FKCN…QRVH), 674–696 (YKCH…RRTH), 702–724 (YKCS…QRIH), and 730–752 (YGCR…QRVH).

It belongs to the krueppel C2H2-type zinc-finger protein family. Expressed in brain and at low levels in kidney and spleen and few hematopoietic cell lines.

The protein resides in the nucleus. In terms of biological role, may be involved in transcriptional regulation. The sequence is that of Zinc finger protein 287 from Mus musculus (Mouse).